The primary structure comprises 659 residues: Exoribonuclease 2 (659 aa).

An RNB domain is found at 189–531 (RENLTALHFV…NHRLIKAVLA (343 aa)). One can recognise an S1 motif domain in the interval 576–658 (NAEFEAEVQD…ATRSIVGEIL (83 aa)).

Belongs to the RNR ribonuclease family. RNase II subfamily.

Its subcellular location is the cytoplasm. It catalyses the reaction Exonucleolytic cleavage in the 3'- to 5'-direction to yield nucleoside 5'-phosphates.. Functionally, involved in mRNA degradation. Hydrolyzes single-stranded polyribonucleotides processively in the 3' to 5' direction. This is Exoribonuclease 2 from Haemophilus influenzae (strain PittGG).